The sequence spans 160 residues: MIKKKKKKSYTSVYALGQYISMSTHKARRVIDQIRGRSYEEALMILELMPYRGCYPIFKLVYSAAANASHNKGFKETNLVISKAEVNQGNTVKKLKPRARGRSYPIKRPTCHITIVLEDISFYQQYEEYLMYLKNPGCRNEKRNLPCYETYSSGGPWDKK.

The protein belongs to the universal ribosomal protein uL22 family. Part of the 50S ribosomal subunit.

The protein localises to the plastid. The protein resides in the chloroplast. Its function is as follows. This protein binds specifically to 23S rRNA. Functionally, the globular domain of the protein is located near the polypeptide exit tunnel on the outside of the subunit, while an extended beta-hairpin is found that lines the wall of the exit tunnel in the center of the 70S ribosome. The sequence is that of Large ribosomal subunit protein uL22c (rpl22) from Aethionema grandiflorum (Persian stone-cress).